The following is a 284-amino-acid chain: Tropomyosin (284 aa).

Residues 1 to 273 adopt a coiled-coil conformation; the sequence is MDAIKKKMVA…KEKYKAISDE (273 aa). Over residues 110-130 the composition is skewed to basic and acidic residues; sequence SGKLEEASKAADESERNRKVL. Residues 110–134 are disordered; the sequence is SGKLEEASKAADESERNRKVLENLN.

The protein belongs to the tropomyosin family. In terms of assembly, homodimer.

Tropomyosin, in association with the troponin complex, plays a central role in the calcium dependent regulation of muscle contraction. This Perna viridis (Asian green mussel) protein is Tropomyosin.